The chain runs to 585 residues: Packaging protein UL32 (585 aa).

Positions 1-25 (MDRVESEEPMDGFESPVFSENTSSN) are disordered. The Zn(2+) site is built by Cys-107, Cys-110, His-187, Cys-193, Cys-408, Cys-411, His-484, and Cys-491. 2 zinc finger regions span residues 107–193 (CLVC…LHVC) and 408–491 (CMLC…DLLC).

It belongs to the herpesviridae UL32 protein family.

It is found in the host cytoplasm. It localises to the host nucleus. In terms of biological role, plays a role in efficient localization of neo-synthesized capsids to nuclear replication compartments, thereby controlling cleavage and packaging of virus genomic DNA. The protein is Packaging protein UL32 (26) of Varicella-zoster virus (strain Dumas) (HHV-3).